We begin with the raw amino-acid sequence, 900 residues long: Zinc finger protein 574 (900 aa).

C2H2-type zinc fingers lie at residues 16–38 (YVCS…QNSH), 76–98 (YQCL…QELH), and 126–148 (YECV…RQTH). S164 carries the post-translational modification Phosphoserine. Residues 213–235 (YKCSECSQLFQMPADFLEHQATH) form a C2H2-type 4 zinc finger. Over residues 244 to 254 (AEPATQQETQV) the composition is skewed to low complexity. The interval 244 to 306 (AEPATQQETQ…RRNNSGESGG (63 aa)) is disordered. Basic and acidic residues predominate over residues 273 to 290 (HSYELRNELRNGEAIGRD). Position 301 is a phosphoserine (S301). 10 C2H2-type zinc fingers span residues 312-334 (LFCS…LRSH), 339-361 (FKCP…LGDH), 367-389 (FLCV…RRAH), 395-416 (HSCP…RRTH), 469-492 (YRCL…RFVH), 498-520 (HKCS…LRTH), 526-548 (FPCP…RLTH), 554-576 (YRCG…RLVH), 582-604 (YRCQ…RYHH), and 610-633 (YKCR…LVIH). Residues 639 to 662 (YRCSSCGAAFPSSLRLREHRCAAA) form a C2H2-type 15; degenerate zinc finger. Residues 670–692 (FECGTCGKKVGSAARLQAHEAAH) form a C2H2-type 16 zinc finger. The disordered stretch occupies residues 690–741 (AAHAAAGPGEVLAKEPPAPRASRATRTPVAPSPTALSGTTSAAPAAPARRRG). S721 is subject to Phosphoserine. Over residues 721–736 (SPTALSGTTSAAPAAP) the composition is skewed to low complexity. T728 is subject to Phosphothreonine. 4 consecutive C2H2-type zinc fingers follow at residues 742–764 (PECS…RRIH), 770–792 (YPCP…RRLH), 798–820 (FACE…RRIH), and 826–848 (YSCP…RKTH). R836 carries the post-translational modification Asymmetric dimethylarginine.

The protein belongs to the krueppel C2H2-type zinc-finger protein family.

The protein resides in the nucleus. Its function is as follows. May be involved in transcriptional regulation. In Mus musculus (Mouse), this protein is Zinc finger protein 574 (Znf574).